We begin with the raw amino-acid sequence, 854 residues long: Fibronectin-binding protein PlpA (854 aa).

The span at 1-24 shows a compositional bias: low complexity; it reads MDNNQNNFNQPGQQGFDQYQQQSG. Residues 1 to 33 form a disordered region; sequence MDNNQNNFNQPGQQGFDQYQQQSGALVSYGYDA. The segment at 91–109 is fibronectin-binding; the sequence is QYNQQQNQGYEQQYDEYGN. Disordered regions lie at residues 247-327, 411-434, 743-766, and 835-854; these read YEQE…LEAP, SSNN…EDSN, TINP…QLPP, and IQPS…YNNR. Residues 258–267 show a composition bias toward basic and acidic residues; that stretch reads EPAHEQDLRE. Polar residues-rich tracts occupy residues 311–320 and 411–428; these read TVNQPDQTPI and SSNN…TSNE. Residues 384–622 adopt a coiled-coil conformation; sequence NLEEIQKVKL…SSFQKALSEV (239 aa). The segment covering 746-764 has biased composition (pro residues); it reads PPQPQPQALPQPHPQPQQL.

The protein resides in the cell membrane. Its function is as follows. Binds immobilized fibronectin, specifically the gelatin/heparin-binding domain. The chain is Fibronectin-binding protein PlpA (plpA) from Mycoplasmoides gallisepticum (strain R(low / passage 15 / clone 2)) (Mycoplasma gallisepticum).